Consider the following 285-residue polypeptide: Bifunctional protein FolD (285 aa).

NADP(+) is bound by residues 166–168 (GAS) and I232.

It belongs to the tetrahydrofolate dehydrogenase/cyclohydrolase family. Homodimer.

The catalysed reaction is (6R)-5,10-methylene-5,6,7,8-tetrahydrofolate + NADP(+) = (6R)-5,10-methenyltetrahydrofolate + NADPH. It catalyses the reaction (6R)-5,10-methenyltetrahydrofolate + H2O = (6R)-10-formyltetrahydrofolate + H(+). It functions in the pathway one-carbon metabolism; tetrahydrofolate interconversion. Its function is as follows. Catalyzes the oxidation of 5,10-methylenetetrahydrofolate to 5,10-methenyltetrahydrofolate and then the hydrolysis of 5,10-methenyltetrahydrofolate to 10-formyltetrahydrofolate. This chain is Bifunctional protein FolD, found in Aliivibrio salmonicida (strain LFI1238) (Vibrio salmonicida (strain LFI1238)).